The following is an 885-amino-acid chain: Exosome complex component 10 (885 aa).

Over residues 1–10 (MAPPSPREHQ) the composition is skewed to basic and acidic residues. Disordered stretches follow at residues 1-23 (MAPPSPREHQSAPATGATKPDAE) and 210-232 (KPLPQALSKERRERPQDRPEDLD). A Glycyl lysine isopeptide (Lys-Gly) (interchain with G-Cter in SUMO2) cross-link involves residue lysine 19. The segment covering 217–230 (SKERRERPQDRPED) has biased composition (basic and acidic residues). The 3'-5' exonuclease domain maps to 289-455 (HVVSSLDELV…YIYDRMRLEL (167 aa)). Aspartate 313, glutamate 315, aspartate 371, and aspartate 440 together coordinate Mg(2+). The region spanning 503–583 (NSQQLTAFQL…QQAREMPLLK (81 aa)) is the HRDC domain. Lysine 583 is covalently cross-linked (Glycyl lysine isopeptide (Lys-Gly) (interchain with G-Cter in SUMO1); alternate). Residue lysine 583 forms a Glycyl lysine isopeptide (Lys-Gly) (interchain with G-Cter in SUMO2); alternate linkage. Lysine 710 is covalently cross-linked (Glycyl lysine isopeptide (Lys-Gly) (interchain with G-Cter in SUMO2)). The interval 730 to 885 (VQKEPKEAAK…RGFRHNWPKR (156 aa)) is disordered. Composition is skewed to basic and acidic residues over residues 732–756 (KEPKEAAKKKVAEQTAAREETKEES) and 776–794 (ATKKRERATSDLRTIEQKQ). Serine 821 is subject to Phosphoserine. Glycyl lysine isopeptide (Lys-Gly) (interchain with G-Cter in SUMO2) cross-links involve residues lysine 833, lysine 859, and lysine 873.

Belongs to the exosome component 10/RRP6 family. Component of the RNA exosome complex. The catalytically inactive RNA exosome core complex (Exo-9) associates with the catalytic subunit EXOSC10/RRP6 (via its N-terminus). Exo-9 may associate with DIS3 to form the nucleolar exosome complex, or DIS3L to form the cytoplasmic exosome complex. The RNA exosome complex interacts with cofactors C1D/RRP47, MPHOSPH6/MPP6 and MTREX/MTR4. Interacts with MTREX; the interaction with MTREX mediates the association of MTREX with nuclear RNA exosomes. Part of the small subunit (SSU) processome, composed of more than 70 proteins and the RNA chaperone small nucleolar RNA (snoRNA) U3. Interacts with ALYREF/THOC4. Interacts with DHX36; this interaction occurs in a RNase-insensitive manner. Interacts with NRDE2. Interacts (via C-terminus) with USP36 (via C-terminus); the interaction is facilitated by the association with RNA and promotes sumoylation of EXOSC10. Mg(2+) is required as a cofactor. Sumoylated by USP36; sumoylation does not significantly affect EXOSC10 nucleolar localization and association with core exosome and USP36, but regulates the nucleolar RNA exosome activity in rRNA processing by promoting binding of EXOSC10 to pre-rRNAs. Effects of sumoylation on EXOSC10 levels vary between different studies. Sumoylation of EXOSC10 is required for the modulation of EXOSC10 effects on cellular protein translation and cell proliferation. Sumoylation is promoted by mild hypothermia. Expressed in testis (at protein level).

The protein localises to the cytoplasm. The protein resides in the nucleus. It localises to the nucleolus. It is found in the nucleoplasm. Functionally, catalytic component of the RNA exosome complex which has 3'-&gt;5' exoribonuclease activity and participates in a multitude of cellular RNA processing and degradation events. In the nucleus, the RNA exosome complex is involved in proper maturation of stable RNA species such as rRNA, snRNA and snoRNA, in the elimination of RNA processing by-products and non-coding 'pervasive' transcripts, such as antisense RNA species and promoter-upstream transcripts (PROMPTs), and of mRNAs with processing defects, thereby limiting or excluding their export to the cytoplasm. Part of the small subunit (SSU) processome, first precursor of the small eukaryotic ribosomal subunit. During the assembly of the SSU processome in the nucleolus, many ribosome biogenesis factors, an RNA chaperone and ribosomal proteins associate with the nascent pre-rRNA and work in concert to generate RNA folding, modifications, rearrangements and cleavage as well as targeted degradation of pre-ribosomal RNA by the RNA exosome. The RNA exosome may be involved in Ig class switch recombination (CSR) and/or Ig variable region somatic hypermutation (SHM) by targeting AICDA deamination activity to transcribed dsDNA substrates. In the cytoplasm, the RNA exosome complex is involved in general mRNA turnover and specifically degrades inherently unstable mRNAs containing AU-rich elements (AREs) within their 3' untranslated regions, and in RNA surveillance pathways, preventing translation of aberrant mRNAs. It seems to be involved in degradation of histone mRNA. EXOSC10 is required for nucleolar localization of C1D and probably mediates the association of MTREX, C1D and MPHOSPH6 with the RNA exosome involved in the maturation of 5.8S rRNA. Plays a role in the recruitment of replication protein A complex (RPA) and RAD51 to DNA double-strand breaks caused by irradiation, contributing to DNA repair by homologous recombination. Regulates levels of damage-induced RNAs in order to prevent DNA-RNA hybrid formation at DNA double-strand breaks and limit DNA end resection after damage. Plays a role in oocyte development, maturation and survival. Required for normal testis development and mitotic division of spermatogonia. Plays a role in proper embryo development. Required for global protein translation. Required for cell proliferation. The chain is Exosome complex component 10 from Rattus norvegicus (Rat).